We begin with the raw amino-acid sequence, 305 residues long: Superkiller complex protein 8 (305 aa).

WD repeat units lie at residues 14-57 (AHED…LELQ), 62-101 (GHQL…QIKS), 104-143 (AGPV…KEHS), 146-187 (TRGK…HTLE), 188-227 (GHAM…LAGT), 230-269 (GHGS…CVNT), and 272-305 (DHQD…DCPM).

The protein belongs to the SKI8 family. Component of the PAF1 complex. Component of the SKI complex.

The protein localises to the nucleus. Its subcellular location is the cytoplasm. Component of the PAF1 complex (PAF1C) which has multiple functions during transcription by RNA polymerase II and is implicated in regulation of development and maintenance of embryonic stem cell pluripotency. PAF1C associates with RNA polymerase II through interaction with POLR2A CTD non-phosphorylated and 'Ser-2'- and 'Ser-5'-phosphorylated forms and is involved in transcriptional elongation, acting both independently and synergistically with TCEA1 and in cooperation with the DSIF complex and HTATSF1. Also acts as a component of the SKI complex, a multiprotein complex that assists the RNA-degrading exosome during the mRNA decay and quality-control pathways. The SKI complex catalyzes mRNA extraction from 80S ribosomal complexes in the 3'-5' direction and channels mRNA to the cytosolic exosome for degradation. This chain is Superkiller complex protein 8 (skic8), found in Danio rerio (Zebrafish).